Consider the following 543-residue polypeptide: Periplasmic oligopeptide-binding protein OppA (543 aa).

An N-terminal signal peptide occupies residues Met1–Ala26. A disulfide bridge connects residues Cys297 and Cys443.

Belongs to the bacterial solute-binding protein 5 family. The complex is composed of two ATP-binding proteins (OppD and OppF), two transmembrane proteins (OppB and OppC) and a solute-binding protein (OppA).

The protein localises to the periplasm. Functionally, part of the ABC transporter complex OppABCDF involved in the uptake of oligopeptides. Plays an important nutritional role. Binds peptides containing from two to five amino acid residues. Displays a preference for tripeptides and tetrapeptides over dipeptides and pentapeptides, for peptides composed of L-amino acids and for positively charged peptides. Cannot bind the cell wall peptide L-Ala-D-Gly-gamma-meso-diaminopimelic acid. This is Periplasmic oligopeptide-binding protein OppA from Escherichia coli (strain K12).